The primary structure comprises 337 residues: Inositol 2-dehydrogenase (337 aa).

Belongs to the Gfo/Idh/MocA family. Homotetramer.

It catalyses the reaction myo-inositol + NAD(+) = scyllo-inosose + NADH + H(+). Its function is as follows. Involved in the oxidation of myo-inositol (MI) to 2-keto-myo-inositol (2KMI or 2-inosose). In Burkholderia cenocepacia (strain HI2424), this protein is Inositol 2-dehydrogenase.